A 117-amino-acid polypeptide reads, in one-letter code: Putative hydrolase fragment YghX (117 aa).

The disordered stretch occupies residues 91-117 (DGLSSVGGYPGNDDKGRELQQQVDPTN).

The polypeptide is Putative hydrolase fragment YghX (yghX) (Escherichia coli (strain K12)).